The primary structure comprises 238 residues: Succinate dehydrogenase assembly factor 2, mitochondrial (238 aa).

The segment at 47–82 (GLKADGSRADQAEAGASQSLDKQSRTLDSVRDDTLS) is disordered. The segment covering 68-80 (KQSRTLDSVRDDT) has biased composition (basic and acidic residues).

Belongs to the SDHAF2 family. Interacts with the flavoprotein subunit within the SDH catalytic dimer.

The protein resides in the mitochondrion matrix. Plays an essential role in the assembly of succinate dehydrogenase (SDH), an enzyme complex (also referred to as respiratory complex II) that is a component of both the tricarboxylic acid (TCA) cycle and the mitochondrial electron transport chain, and which couples the oxidation of succinate to fumarate with the reduction of ubiquinone (coenzyme Q) to ubiquinol. Required for flavinylation (covalent attachment of FAD) of the flavoprotein subunit of the SDH catalytic dimer. The protein is Succinate dehydrogenase assembly factor 2, mitochondrial of Mycosarcoma maydis (Corn smut fungus).